Reading from the N-terminus, the 111-residue chain is Large ribosomal subunit protein uL22 (111 aa).

The protein belongs to the universal ribosomal protein uL22 family. In terms of assembly, part of the 50S ribosomal subunit.

This protein binds specifically to 23S rRNA; its binding is stimulated by other ribosomal proteins, e.g. L4, L17, and L20. It is important during the early stages of 50S assembly. It makes multiple contacts with different domains of the 23S rRNA in the assembled 50S subunit and ribosome. In terms of biological role, the globular domain of the protein is located near the polypeptide exit tunnel on the outside of the subunit, while an extended beta-hairpin is found that lines the wall of the exit tunnel in the center of the 70S ribosome. The sequence is that of Large ribosomal subunit protein uL22 from Clostridium acetobutylicum (strain ATCC 824 / DSM 792 / JCM 1419 / IAM 19013 / LMG 5710 / NBRC 13948 / NRRL B-527 / VKM B-1787 / 2291 / W).